A 650-amino-acid polypeptide reads, in one-letter code: Chaperone protein HtpG (650 aa).

Positions 1–349 are a; substrate-binding; sequence MTKTTKKFET…SSDLPLNVSR (349 aa). The b stretch occupies residues 350–566; sequence EILQEDVQIK…EHGLNANMER (217 aa). The c stretch occupies residues 567–650; that stretch reads ILRAMNQDVP…VADGKAAAGE (84 aa).

This sequence belongs to the heat shock protein 90 family. As to quaternary structure, homodimer.

The protein localises to the cytoplasm. Functionally, molecular chaperone. Has ATPase activity. The protein is Chaperone protein HtpG of Geobacter metallireducens (strain ATCC 53774 / DSM 7210 / GS-15).